Consider the following 432-residue polypeptide: Histidinol dehydrogenase (432 aa).

Residues Y133, Q194, and N217 each coordinate NAD(+). S240, Q262, and H265 together coordinate substrate. Zn(2+) is bound by residues Q262 and H265. Active-site proton acceptor residues include E330 and H331. Substrate is bound by residues H331, D364, E418, and H423. D364 is a Zn(2+) binding site. H423 contacts Zn(2+).

This sequence belongs to the histidinol dehydrogenase family. The cofactor is Zn(2+).

It catalyses the reaction L-histidinol + 2 NAD(+) + H2O = L-histidine + 2 NADH + 3 H(+). It functions in the pathway amino-acid biosynthesis; L-histidine biosynthesis; L-histidine from 5-phospho-alpha-D-ribose 1-diphosphate: step 9/9. In terms of biological role, catalyzes the sequential NAD-dependent oxidations of L-histidinol to L-histidinaldehyde and then to L-histidine. The sequence is that of Histidinol dehydrogenase from Nitrosomonas europaea (strain ATCC 19718 / CIP 103999 / KCTC 2705 / NBRC 14298).